A 432-amino-acid chain; its full sequence is Enolase (432 aa).

Residue Gln163 coordinates (2R)-2-phosphoglycerate. Residue Glu205 is the Proton donor of the active site. Mg(2+) contacts are provided by Asp242, Glu285, and Asp312. Residues Lys337, Arg366, Ser367, and Lys388 each contribute to the (2R)-2-phosphoglycerate site. The active-site Proton acceptor is Lys337.

It belongs to the enolase family. Mg(2+) serves as cofactor.

It localises to the cytoplasm. The protein localises to the secreted. Its subcellular location is the cell surface. The catalysed reaction is (2R)-2-phosphoglycerate = phosphoenolpyruvate + H2O. It participates in carbohydrate degradation; glycolysis; pyruvate from D-glyceraldehyde 3-phosphate: step 4/5. Its function is as follows. Catalyzes the reversible conversion of 2-phosphoglycerate (2-PG) into phosphoenolpyruvate (PEP). It is essential for the degradation of carbohydrates via glycolysis. The polypeptide is Enolase (Bifidobacterium adolescentis (strain ATCC 15703 / DSM 20083 / NCTC 11814 / E194a)).